Consider the following 804-residue polypeptide: Phenylalanine--tRNA ligase beta subunit (804 aa).

Positions 39-155 (AEGLKKIVVG…ADVKPGEEVY (117 aa)) constitute a tRNA-binding domain. The B5 domain occupies 408 to 483 (RNPSVVKTTV…RIYGYDNLKS (76 aa)). Asp-461, Asp-467, Glu-470, and Glu-471 together coordinate Mg(2+). Residues 711–804 (PKFPAIERDL…LKESLKIKVR (94 aa)) enclose the FDX-ACB domain.

Belongs to the phenylalanyl-tRNA synthetase beta subunit family. Type 1 subfamily. As to quaternary structure, tetramer of two alpha and two beta subunits. The cofactor is Mg(2+).

It is found in the cytoplasm. It carries out the reaction tRNA(Phe) + L-phenylalanine + ATP = L-phenylalanyl-tRNA(Phe) + AMP + diphosphate + H(+). The polypeptide is Phenylalanine--tRNA ligase beta subunit (Lactobacillus johnsonii (strain CNCM I-12250 / La1 / NCC 533)).